Reading from the N-terminus, the 379-residue chain is Putative acetyl-CoA C-acetyltransferase VraB (379 aa).

C86 serves as the catalytic Acyl-thioester intermediate. The active-site Proton acceptor is the H338.

This sequence belongs to the thiolase-like superfamily. Thiolase family.

In Staphylococcus aureus (strain MSSA476), this protein is Putative acetyl-CoA C-acetyltransferase VraB (vraB).